The sequence spans 179 residues: Large ribosomal subunit protein uL5 (179 aa).

This sequence belongs to the universal ribosomal protein uL5 family. In terms of assembly, part of the 50S ribosomal subunit; part of the 5S rRNA/L5/L18/L25 subcomplex. Contacts the 5S rRNA and the P site tRNA. Forms a bridge to the 30S subunit in the 70S ribosome.

Its function is as follows. This is one of the proteins that bind and probably mediate the attachment of the 5S RNA into the large ribosomal subunit, where it forms part of the central protuberance. In the 70S ribosome it contacts protein S13 of the 30S subunit (bridge B1b), connecting the 2 subunits; this bridge is implicated in subunit movement. Contacts the P site tRNA; the 5S rRNA and some of its associated proteins might help stabilize positioning of ribosome-bound tRNAs. The polypeptide is Large ribosomal subunit protein uL5 (Prochlorococcus marinus (strain MIT 9313)).